We begin with the raw amino-acid sequence, 386 residues long: Glutamate 5-kinase (386 aa).

K28 lines the ATP pocket. Residues S68, D155, and N167 each coordinate substrate. 187-188 (TD) lines the ATP pocket. The PUA domain maps to 294–372 (RGRLVLDDGA…EKIESILGYI (79 aa)).

The protein belongs to the glutamate 5-kinase family.

Its subcellular location is the cytoplasm. It catalyses the reaction L-glutamate + ATP = L-glutamyl 5-phosphate + ADP. It functions in the pathway amino-acid biosynthesis; L-proline biosynthesis; L-glutamate 5-semialdehyde from L-glutamate: step 1/2. In terms of biological role, catalyzes the transfer of a phosphate group to glutamate to form L-glutamate 5-phosphate. This chain is Glutamate 5-kinase, found in Hahella chejuensis (strain KCTC 2396).